Consider the following 226-residue polypeptide: 6-deoxy-6-sulfo-D-fructose transaldolase (226 aa).

The Schiff-base intermediate with substrate role is filled by Lys-89.

The protein belongs to the transaldolase family.

The enzyme catalyses 6-deoxy-6-sulfo-D-fructose + D-glyceraldehyde 3-phosphate = D-fructose 6-phosphate + (2S)-3-sulfolactaldehyde. It catalyses the reaction 6-deoxy-6-sulfo-D-fructose + D-erythrose 4-phosphate = (2S)-3-sulfolactaldehyde + D-sedoheptulose 7-phosphate. Its function is as follows. Part of the sulfo-TAL (or sulfo-SFT) pathway, a D-sulfoquinovose degradation pathway that produces sulfolactate (SL). Catalyzes the conversion of 6-deoxy-6-sulfo-D-fructose (SF) and glyceraldehyde 3-phosphate (GAP) into fructose-6-phosphate (F6P) and 3-sulfolactaldehyde (SLA). Can also catalyze the SF-cleavage with erythrose 4-phosphate (E4P) as acceptor, forming 3-sulfolactaldehyde (SLA) and sedoheptulose 7-phosphate (S7P). This chain is 6-deoxy-6-sulfo-D-fructose transaldolase, found in Priestia aryabhattai (Bacillus aryabhattai).